The following is a 372-amino-acid chain: Trihelix transcription factor GT-4 (372 aa).

One can recognise a Myb-like domain in the interval 47 to 111; sequence APKKRAETWA…MCTDKWRNIL (65 aa). The residue at position 167 (S167) is a Phosphoserine.

The protein resides in the nucleus. Functionally, probable transcription factor that binds specific DNA sequence. The chain is Trihelix transcription factor GT-4 (GT-4) from Arabidopsis thaliana (Mouse-ear cress).